The chain runs to 371 residues: Leucine-rich repeat-containing protein 2 (371 aa).

9 LRR repeats span residues 122 to 143 (HLRE…IQLF), 145 to 166 (AMRI…IGCL), 168 to 189 (NLKE…LGDC), 191 to 214 (NLER…SNLK), 215 to 235 (QVTF…CVLR), 238 to 260 (NLQW…DRLE), 261 to 283 (ELQS…LNLK), 284 to 305 (KLTL…LCDS), and 308 to 329 (PLKF…DGNE).

This chain is Leucine-rich repeat-containing protein 2 (LRRC2), found in Homo sapiens (Human).